We begin with the raw amino-acid sequence, 575 residues long: Sodium/calcium exchanger NCL2 (575 aa).

3 helical membrane passes run 69–89 (FLPC…YGFL), 112–132 (IVGG…LILV), and 146–166 (VLIG…LLWG). N-linked (GlcNAc...) asparagine glycosylation is present at Asn-179. 2 helical membrane-spanning segments follow: residues 210–230 (IMAI…FKLH) and 237–257 (VLIG…YQVF). EF-hand domains follow at residues 297 to 332 (PNVS…INFE) and 337 to 372 (NSNL…WLDE). Asn-298 carries an N-linked (GlcNAc...) asparagine glycan. Residues Asp-310, Asp-312, Asp-314, Lys-316, Glu-321, Asp-350, Ser-352, Asn-354, and Glu-361 each contribute to the Ca(2+) site. The next 5 membrane-spanning stretches (helical) occupy residues 417–437 (WTCI…AASA), 457–477 (FISF…SAII), 494–514 (VYGG…ALVY), 522–542 (FSSE…FTSF), and 548–568 (LWTC…VYIL).

Belongs to the Ca(2+):cation antiporter (CaCA) (TC 2.A.19) family.

Its subcellular location is the cell membrane. May function as a sodium/calcium exchanger (NCX) and participate in the maintenance of calcium homeostasis. May play a role abiotic stress responses. In Oryza sativa subsp. japonica (Rice), this protein is Sodium/calcium exchanger NCL2.